An 858-amino-acid polypeptide reads, in one-letter code: MQQVEGRNCLPAEVRIGLETLKRRRLERMRLTAQNNAGDGPPVPARSGGDALRTPANCGVRLHANNGTALPSRTTQNKDPFAKRRVDKFDMSSLEWIDKIEECPVYYPTKEEFEDPIGYIQKIAPVASKYGICKIVSPVSASVPAGVVLMKEQPGFKFMTRVQPLRLAKWAEDDTVTFFMSERKYTFRDYEKMANKVFAKKYSSASCLPAKYVEEEFWREIAFGKMDFVEYACDVDGSAFSSSPHDQLGKSNWNLKNFSRLSNSVLRLLQTPIPGVTDPMLYIGMLFSMFAWHVEDHYLYSINYHHCGAFKTWYGIPGDAAPGFEKVASQFVYNKDILVGEGEDAAFDVLLGKTTMFPPNVLLDHNVPVYKAVQKPGEFVITFPRSYHAGFSHGFNCGEAVNFAISDWFPLGSVASRRYALLNRTPLLAHEELLCRSAVLLSHKLLNSDPKSLNKSEHPHSQRCLKSCFVQLMRFQRNTRGLLAKMGSQIHYKPKTYPNLSCSMCRRDCYITHVLCGCNFDPVCLHHEQELRSCPCKSNQVVYVREDIQELEALSRKFEKDICLDKEISGFDSYKQAEKNEPFFEITRNLRNTEVNLIEDAFSGATAADAAKSSPATSTLTSFAQHDVPVLAEAIVCANQADQLYSTTEQTISSPLVKGTDAVGANSSSMADANNGTGSCNASAVEYSGNSDSESEIFRVKRRSGVSVKPASDAKTSNLSDQQVLRRLKKVRPEIQQHNKRPEDYGHCSVPSGRMSMKNLNSSSSCGEEHWRMKRRQLETQQDESSYSAKQKSYSYPSTSYSFRGEFVEMSRDAAAEVRPKRLKIRLPSSSTNRVVEQGSSGQRFTRDDKSLGCWPAI.

One can recognise a JmjN domain in the interval 103–144 (CPVYYPTKEEFEDPIGYIQKIAPVASKYGICKIVSPVSASVP). One can recognise a JmjC domain in the interval 250–420 (KSNWNLKNFS…LGSVASRRYA (171 aa)). Residues H293, E295, and H388 each coordinate Fe cation. The span at 737–746 (QHNKRPEDYG) shows a compositional bias: basic and acidic residues. Disordered regions lie at residues 737-791 (QHNK…SAKQ) and 829-858 (SSST…WPAI). Over residues 829-844 (SSSTNRVVEQGSSGQR) the composition is skewed to polar residues.

It depends on Fe(2+) as a cofactor.

It localises to the nucleus. It carries out the reaction N(6),N(6),N(6)-trimethyl-L-lysyl(9)-[histone H3] + 2 2-oxoglutarate + 2 O2 = N(6)-methyl-L-lysyl(9)-[histone H3] + 2 formaldehyde + 2 succinate + 2 CO2. In terms of biological role, histone demethylase that demethylates 'Lys-9' (H3K9me) of histone H3 with a specific activity for H3K9me3 and H3K9me2. No activity on H3K4me3, H3K9me1, H3K27me2 and H3K36me3/2. Involved in the control of floral organ development by demethylating H3K9me3 and H3K9me2 in the promoter regions of DH1 and MADS47. The 'Lys-9' demethylation of these two genes is required for induction of their expression. This is Lysine-specific demethylase JMJ706 (JMJ706) from Oryza sativa subsp. japonica (Rice).